Consider the following 278-residue polypeptide: Coiled-coil domain-containing protein 121 (278 aa).

Coiled-coil stretches lie at residues 1–30 (MTDL…REKL) and 105–243 (QAMR…LIQA). The tract at residues 253-278 (QCLNRQDVPKTTPSLPQGTKSRINPK) is disordered.

This chain is Coiled-coil domain-containing protein 121 (CCDC121), found in Homo sapiens (Human).